The primary structure comprises 461 residues: 3-deoxy-D-manno-octulosonic acid transferase (461 aa).

Residues 2–22 (MLLYYTLSFILLPVYFIIIFI) traverse the membrane as a helical; Signal-anchor segment. Residues 47–88 (SALDFIQMSVNKEGFTDHKTTSYVDMHRNASLMYKLSLERSY) form the RPE1 insert domain. The Proton acceptor role is filled by Glu102. Residues 306 to 307 (PR), 347 to 349 (FGE), and 372 to 375 (NILE) contribute to the CMP site.

The protein belongs to the glycosyltransferase group 1 family. Glycosyltransferase 30 subfamily.

It is found in the cell inner membrane. The catalysed reaction is lipid IVA (E. coli) + CMP-3-deoxy-beta-D-manno-octulosonate = alpha-Kdo-(2-&gt;6)-lipid IVA (E. coli) + CMP + H(+). Its pathway is bacterial outer membrane biogenesis; LPS core biosynthesis. Involved in lipopolysaccharide (LPS) biosynthesis. Catalyzes the transfer of 3-deoxy-D-manno-octulosonate (Kdo) residue(s) from CMP-Kdo to lipid IV(A), the tetraacyldisaccharide-1,4'-bisphosphate precursor of lipid A. In Rickettsia prowazekii (strain Madrid E), this protein is 3-deoxy-D-manno-octulosonic acid transferase (waaA).